The following is a 360-amino-acid chain: MVETFYEVMRRQGISRRSFLKYCSLTATSLGLGPSFLPQIAHAMETKPRTPVLWLHGLECTCCSESFIRSAHPLAKDVVLSMISLDYDDTLMAAAGHQAEAILEEIMTKYKGNYILAVEGNPPLNQDGMSCIIGGRPFIEQLKYVAKDAKAIISWGSCASWGCVQAAKPNPTQATPVHKVITDKPIIKVPGCPPIAEVMTGVITYMLTFDRIPELDRQGRPKMFYSQRIHDKCYRRPHFDAGQFVEEWDDESARKGFCLYKMGCKGPTTYNACSTTRWNEGTSFPIQSGHGCIGCSEDGFWDKGSFYDRLTGISQFGVEANADKIGGTASVVVGAAVTAHAAASAIKRASKKNETSGSEH.

Positions Met-1 to Ala-43 form a signal peptide, tat-type signal. [4Fe-4S] cluster is bound by residues Cys-60, Cys-63, Cys-158, Cys-192, His-230, Cys-233, Cys-258, and Cys-264. [3Fe-4S] cluster-binding residues include Cys-273, Cys-292, and Cys-295.

Belongs to the [NiFe]/[NiFeSe] hydrogenase small subunit family. In terms of assembly, heterodimer of a large and a small subunit. The cofactor is [4Fe-4S] cluster. Requires [3Fe-4S] cluster as cofactor. Post-translationally, predicted to be exported by the Tat system. The position of the signal peptide cleavage has been experimentally proven.

The protein resides in the cell membrane. The catalysed reaction is H2 + A = AH2. This enzyme recycles the H(2) produced by nitrogenase to increase the production of ATP and to protect nitrogenase against inhibition or damage by O(2) under carbon- or phosphate-limited conditions. This chain is Uptake hydrogenase small subunit (hoxK), found in Cupriavidus necator (strain ATCC 17699 / DSM 428 / KCTC 22496 / NCIMB 10442 / H16 / Stanier 337) (Ralstonia eutropha).